A 329-amino-acid chain; its full sequence is Beta-ketoacyl-[acyl-carrier-protein] synthase III (329 aa).

Catalysis depends on residues cysteine 114 and histidine 255. The ACP-binding stretch occupies residues glutamine 256 to arginine 260. The active site involves asparagine 285.

It belongs to the thiolase-like superfamily. FabH family. Homodimer.

Its subcellular location is the cytoplasm. It carries out the reaction malonyl-[ACP] + acetyl-CoA + H(+) = 3-oxobutanoyl-[ACP] + CO2 + CoA. Its pathway is lipid metabolism; fatty acid biosynthesis. In terms of biological role, catalyzes the condensation reaction of fatty acid synthesis by the addition to an acyl acceptor of two carbons from malonyl-ACP. Catalyzes the first condensation reaction which initiates fatty acid synthesis and may therefore play a role in governing the total rate of fatty acid production. Possesses both acetoacetyl-ACP synthase and acetyl transacylase activities. Its substrate specificity determines the biosynthesis of branched-chain and/or straight-chain of fatty acids. This chain is Beta-ketoacyl-[acyl-carrier-protein] synthase III, found in Trichodesmium erythraeum (strain IMS101).